The chain runs to 209 residues: Cytochrome bo(3) ubiquinol oxidase subunit 3 (209 aa).

Topologically, residues 1–29 are cytoplasmic; the sequence is MSTAVLNKHLADAHEVGHDHDHAHDSGGN. The helical transmembrane segment at 30–50 threads the bilayer; the sequence is TVFGFWLYLMTDCVLFASVFA. The Periplasmic portion of the chain corresponds to 51–72; sequence TYAVLVHHTAGGPSGKDIFELP. The helical transmembrane segment at 73-93 threads the bilayer; sequence YVLVETAILLVSSCTYGLAML. Residues 94–102 lie on the Cytoplasmic side of the membrane; it reads SAHKGAKGQ. Residues 103 to 123 traverse the membrane as a helical segment; sequence AIAWLGVTFLLGAAFIGMEIN. Topologically, residues 124-143 are periplasmic; that stretch reads EFHHLIAEGFGPSRSAFLSS. Residues 144 to 164 form a helical membrane-spanning segment; sequence FFTLVGMHGLHVSAGLLWMLV. Residues 165 to 186 are Cytoplasmic-facing; that stretch reads LMAQIWTRGLTAQNNTRMMCLS. The helical transmembrane segment at 187–207 threads the bilayer; that stretch reads LFWHFLDIVWICVFTVVYLMG. The Periplasmic segment spans residues 208–209; sequence AL.

The protein belongs to the cytochrome c oxidase subunit 3 family. Heterooctamer of two A chains, two B chains, two C chains and two D chains.

It is found in the cell inner membrane. Functionally, cytochrome bo(3) ubiquinol terminal oxidase is the component of the aerobic respiratory chain of E.coli that predominates when cells are grown at high aeration. Has proton pump activity across the membrane in addition to electron transfer, pumping 2 protons/electron. This is Cytochrome bo(3) ubiquinol oxidase subunit 3 (cyoC) from Pseudomonas aeruginosa (strain ATCC 15692 / DSM 22644 / CIP 104116 / JCM 14847 / LMG 12228 / 1C / PRS 101 / PAO1).